We begin with the raw amino-acid sequence, 474 residues long: Protein nucleotidyltransferase YdiU (474 aa).

8 residues coordinate ATP: Gly89, Gly91, Arg92, Lys112, Asp124, Gly125, Arg175, and Arg182. Asp256 (proton acceptor) is an active-site residue. Mg(2+) contacts are provided by Asn257 and Asp266. Asp266 contributes to the ATP binding site.

Belongs to the SELO family. Requires Mg(2+) as cofactor. It depends on Mn(2+) as a cofactor.

The enzyme catalyses L-seryl-[protein] + ATP = 3-O-(5'-adenylyl)-L-seryl-[protein] + diphosphate. It catalyses the reaction L-threonyl-[protein] + ATP = 3-O-(5'-adenylyl)-L-threonyl-[protein] + diphosphate. The catalysed reaction is L-tyrosyl-[protein] + ATP = O-(5'-adenylyl)-L-tyrosyl-[protein] + diphosphate. It carries out the reaction L-histidyl-[protein] + UTP = N(tele)-(5'-uridylyl)-L-histidyl-[protein] + diphosphate. The enzyme catalyses L-seryl-[protein] + UTP = O-(5'-uridylyl)-L-seryl-[protein] + diphosphate. It catalyses the reaction L-tyrosyl-[protein] + UTP = O-(5'-uridylyl)-L-tyrosyl-[protein] + diphosphate. Functionally, nucleotidyltransferase involved in the post-translational modification of proteins. It can catalyze the addition of adenosine monophosphate (AMP) or uridine monophosphate (UMP) to a protein, resulting in modifications known as AMPylation and UMPylation. The polypeptide is Protein nucleotidyltransferase YdiU (Corynebacterium glutamicum (strain R)).